Reading from the N-terminus, the 183-residue chain is Probable cobalt-precorrin-6B C(15)-methyltransferase (decarboxylating) (183 aa).

Residues Thr19, 43-47 (GCGSG), Asp64, and Ala92 contribute to the S-adenosyl-L-methionine site.

Belongs to the methyltransferase superfamily. Archaeal-type CbiT family.

The catalysed reaction is Co-precorrin-6B + S-adenosyl-L-methionine = Co-precorrin-7 + S-adenosyl-L-homocysteine + CO2. The protein operates within cofactor biosynthesis; adenosylcobalamin biosynthesis; cob(II)yrinate a,c-diamide from sirohydrochlorin (anaerobic route): step 8/10. Catalyzes the methylation of C-15 in cobalt-precorrin-6B followed by the decarboxylation of C-12 to form cobalt-precorrin-7. The polypeptide is Probable cobalt-precorrin-6B C(15)-methyltransferase (decarboxylating) (Methanocaldococcus jannaschii (strain ATCC 43067 / DSM 2661 / JAL-1 / JCM 10045 / NBRC 100440) (Methanococcus jannaschii)).